We begin with the raw amino-acid sequence, 273 residues long: uncharacterized protein (273 aa).

This is an uncharacterized protein from Acanthamoeba polyphaga mimivirus (APMV).